The chain runs to 151 residues: FAD synthase (151 aa).

ATP-binding positions include 12–13, 17–20, D97, and Y125; these read TF and HPGH.

This sequence belongs to the archaeal FAD synthase family. As to quaternary structure, homodimer. A divalent metal cation is required as a cofactor.

It carries out the reaction FMN + ATP + H(+) = FAD + diphosphate. Its pathway is cofactor biosynthesis; FAD biosynthesis; FAD from FMN: step 1/1. Its function is as follows. Catalyzes the transfer of the AMP portion of ATP to flavin mononucleotide (FMN) to produce flavin adenine dinucleotide (FAD) coenzyme. In Methanocaldococcus sp. (strain FS406-22), this protein is FAD synthase.